We begin with the raw amino-acid sequence, 445 residues long: Homoserine dehydrogenase (445 aa).

Phenylalanine 26, threonine 28, and valine 29 together coordinate NADPH. Residues valine 29 and alanine 58 each coordinate NAD(+). An NADP(+)-binding site is contributed by valine 29. Lysine 119 serves as a coordination point for NADPH. Lysine 119 lines the NADP(+) pocket. Na(+)-binding residues include glutamate 143, valine 146, glycine 148, and isoleucine 150. The NADP(+) site is built by glycine 201 and glutamate 204. The L-homoserine site is built by glutamate 204 and aspartate 215. Lysine 219 functions as the Proton donor in the catalytic mechanism. Residue glycine 321 participates in NADPH binding. Glycine 321 contacts NAD(+). An NADP(+)-binding site is contributed by glycine 321. Positions histidine 368 to aspartate 445 constitute an ACT domain.

The protein belongs to the homoserine dehydrogenase family. A metal cation serves as cofactor.

The enzyme catalyses L-homoserine + NADP(+) = L-aspartate 4-semialdehyde + NADPH + H(+). It catalyses the reaction L-homoserine + NAD(+) = L-aspartate 4-semialdehyde + NADH + H(+). Its pathway is amino-acid biosynthesis; L-methionine biosynthesis via de novo pathway; L-homoserine from L-aspartate: step 3/3. It participates in amino-acid biosynthesis; L-threonine biosynthesis; L-threonine from L-aspartate: step 3/5. Feedback inhibition by threonine. In terms of biological role, catalyzes the conversion of L-aspartate-beta-semialdehyde (L-Asa) to L-homoserine (L-Hse), the third step in the biosynthesis of threonine and methionine from aspartate. The protein is Homoserine dehydrogenase (hom) of Corynebacterium glutamicum (strain ATCC 13032 / DSM 20300 / JCM 1318 / BCRC 11384 / CCUG 27702 / LMG 3730 / NBRC 12168 / NCIMB 10025 / NRRL B-2784 / 534).